The chain runs to 145 residues: D-aminoacyl-tRNA deacylase (145 aa).

A Gly-cisPro motif, important for rejection of L-amino acids motif is present at residues Gly-137–Pro-138.

This sequence belongs to the DTD family. Homodimer.

The protein localises to the cytoplasm. It catalyses the reaction glycyl-tRNA(Ala) + H2O = tRNA(Ala) + glycine + H(+). It carries out the reaction a D-aminoacyl-tRNA + H2O = a tRNA + a D-alpha-amino acid + H(+). Its function is as follows. An aminoacyl-tRNA editing enzyme that deacylates mischarged D-aminoacyl-tRNAs. Also deacylates mischarged glycyl-tRNA(Ala), protecting cells against glycine mischarging by AlaRS. Acts via tRNA-based rather than protein-based catalysis; rejects L-amino acids rather than detecting D-amino acids in the active site. By recycling D-aminoacyl-tRNA to D-amino acids and free tRNA molecules, this enzyme counteracts the toxicity associated with the formation of D-aminoacyl-tRNA entities in vivo and helps enforce protein L-homochirality. This Shewanella sp. (strain MR-4) protein is D-aminoacyl-tRNA deacylase.